The chain runs to 557 residues: Glucose-6-phosphate isomerase (557 aa).

A2 bears the N-acetylalanine mark. At K12 the chain carries N6-acetyllysine. S107 bears the Phosphoserine mark. Residue K142 is modified to N6-acetyllysine. 159–160 (GS) contacts D-glucose 6-phosphate. S185 carries the phosphoserine; by CK2 modification. 210–215 (SKTFTT) is a D-glucose 6-phosphate binding site. The residue at position 250 (T250) is a Phosphothreonine. D-glucose 6-phosphate-binding residues include Q354, E358, and H389. Catalysis depends on E358, which acts as the Proton donor. H389 is a catalytic residue. S455 carries the post-translational modification Phosphoserine. Residue K519 participates in D-glucose 6-phosphate binding. K519 is a catalytic residue.

This sequence belongs to the GPI family. Homodimer; in the catalytically active form. Monomer in the secreted form. In terms of processing, phosphorylation at Ser-185 by CK2 has been shown to decrease enzymatic activity and may contribute to secretion by a non-classical secretory pathway. Post-translationally, ISGylated.

It localises to the cytoplasm. The protein localises to the secreted. The enzyme catalyses alpha-D-glucose 6-phosphate = beta-D-fructose 6-phosphate. It functions in the pathway carbohydrate degradation; glycolysis; D-glyceraldehyde 3-phosphate and glycerone phosphate from D-glucose: step 2/4. Functionally, in the cytoplasm, catalyzes the conversion of glucose-6-phosphate to fructose-6-phosphate, the second step in glycolysis, and the reverse reaction during gluconeogenesis. Besides it's role as a glycolytic enzyme, also acts as a secreted cytokine: acts as an angiogenic factor (AMF) that stimulates endothelial cell motility. Acts as a neurotrophic factor, neuroleukin, for spinal and sensory neurons. It is secreted by lectin-stimulated T-cells and induces immunoglobulin secretion. In Bos taurus (Bovine), this protein is Glucose-6-phosphate isomerase.